The chain runs to 778 residues: Aconitate hydratase, mitochondrial (778 aa).

The transit peptide at 1-16 (MLSARSAIKRPIVRGL) directs the protein to the mitochondrion. Substrate-binding positions include Gln-95 and 188–190 (DSH). Position 382 (Cys-382) interacts with [4Fe-4S] cluster. The residue at position 391 (Ser-391) is a Phosphoserine. Phosphothreonine is present on Thr-409. [4Fe-4S] cluster-binding residues include Cys-445 and Cys-448. Residues Arg-471 and Arg-476 each contribute to the substrate site. Ser-556 carries the phosphoserine modification. Residues Arg-604 and 667 to 668 (SR) contribute to the substrate site.

This sequence belongs to the aconitase/IPM isomerase family. Monomer. Binds to mitochondrial DNA (mtDNA) and identified as component of mitochondrial nucleoids. [4Fe-4S] cluster serves as cofactor.

It localises to the mitochondrion. The protein resides in the cytoplasm. It catalyses the reaction citrate = D-threo-isocitrate. The protein operates within carbohydrate metabolism; tricarboxylic acid cycle; isocitrate from oxaloacetate: step 2/2. With respect to regulation, subject to catabolite regulation. In terms of biological role, catalyzes the isomerization of citrate to isocitrate via cis-aconitate, a step in the citric acid cycle. Can also provide minor contributions to the reversible dehydration of (R)-homocitrate to cis-homoaconitate, a step in the alpha-aminoadipate pathway for lysine biosynthesis. Also plays an essential role in mtDNA maintenance. May directly protect mtDNA from accumulation of point mutations and ssDNA breaks as a component of mitochondrial nucleoids, or by preventing accumulation of iron citrate thereby alleviating its detrimental effects in mitochondria. The chain is Aconitate hydratase, mitochondrial from Saccharomyces cerevisiae (strain ATCC 204508 / S288c) (Baker's yeast).